Here is an 83-residue protein sequence, read N- to C-terminus: Putative membrane protein insertion efficiency factor (83 aa).

A disordered region spans residues 63–83; that stretch reads GGNDPVPDHFSLRRNKTDISD. Over residues 68-83 the composition is skewed to basic and acidic residues; that stretch reads VPDHFSLRRNKTDISD.

This sequence belongs to the UPF0161 family.

The protein resides in the cell membrane. Could be involved in insertion of integral membrane proteins into the membrane. This Streptococcus agalactiae serotype Ia (strain ATCC 27591 / A909 / CDC SS700) protein is Putative membrane protein insertion efficiency factor.